Here is a 251-residue protein sequence, read N- to C-terminus: Triosephosphate isomerase (251 aa).

A substrate-binding site is contributed by 12–14; that stretch reads NWK. The Electrophile role is filled by His-99. The active-site Proton acceptor is the Glu-169. Substrate is bound by residues Gly-175, Ser-214, and 235–236; that span reads GG.

It belongs to the triosephosphate isomerase family. Homodimer.

The protein resides in the cytoplasm. The catalysed reaction is D-glyceraldehyde 3-phosphate = dihydroxyacetone phosphate. It functions in the pathway carbohydrate biosynthesis; gluconeogenesis. It participates in carbohydrate degradation; glycolysis; D-glyceraldehyde 3-phosphate from glycerone phosphate: step 1/1. In terms of biological role, involved in the gluconeogenesis. Catalyzes stereospecifically the conversion of dihydroxyacetone phosphate (DHAP) to D-glyceraldehyde-3-phosphate (G3P). The chain is Triosephosphate isomerase from Bradyrhizobium sp. (strain BTAi1 / ATCC BAA-1182).